A 142-amino-acid polypeptide reads, in one-letter code: Deoxyuridine 5'-triphosphate nucleotidohydrolase (142 aa).

Belongs to the dUTPase family. It depends on Mg(2+) as a cofactor.

It catalyses the reaction dUTP + H2O = dUMP + diphosphate + H(+). Functionally, this enzyme is involved in nucleotide metabolism: it produces dUMP, the immediate precursor of thymidine nucleotides and it decreases the intracellular concentration of dUTP so that uracil cannot be incorporated into DNA. This chain is Deoxyuridine 5'-triphosphate nucleotidohydrolase (DUT), found in Swinepox virus (strain Kasza) (SWPV).